The chain runs to 971 residues: Endoplasmic reticulum calcium ATPase srcA (971 aa).

Over 1 to 25 (MNNEALAEDPPTPLWELVLEQFKDQ) the chain is Cytoplasmic. A helical transmembrane segment spans residues 26–46 (LVLILLGSAAVSFVLALFEEG). Residues 47-49 (DDW) are Lumenal-facing. A helical membrane pass occupies residues 50 to 70 (TAFVDPVVILTILILNAVVGV). Topologically, residues 71–217 (TQESSAEKAI…PTPLKQKLND (147 aa)) are cytoplasmic. Residues 218–238 (FGDMLAKVITVICVLVWLINV) traverse the membrane as a helical segment. Topologically, residues 239–262 (EHFNDPAHGGWAKGAIYYLKIAVS) are lumenal. A helical transmembrane segment spans residues 263–283 (LGVAAIPEGLAVVITTCLALG). Residues V265, A266, I268, and E270 each coordinate Ca(2+). Over 284–718 (TRKMAAKNAV…GRSIYSNTQQ (435 aa)) the chain is Cytoplasmic. The active-site 4-aspartylphosphate intermediate is D312. D312 and T314 together coordinate Mg(2+). ATP-binding residues include T314, E402, R453, K473, R518, R637, and K643. Position 662 (D662) interacts with Mg(2+). N665 contributes to the ATP binding site. The chain crosses the membrane as a helical span at residues 719 to 741 (FIRYLISSNIGEVVSIFLTAALG). Residues N727 and E730 each coordinate Ca(2+). Residues 742–750 (MPEALIPVQ) are Lumenal-facing. A helical membrane pass occupies residues 751–770 (LLWVNLVTDGLPATALSFNP). Ca(2+) is bound by residues N755, T758, and D759. The Cytoplasmic segment spans residues 771 to 795 (PDHDVMRRAPRKRDEPLVGGWLLFR). A helical membrane pass occupies residues 796 to 816 (YLAIGTYVGAATVFGYIWWFV). At 817–854 (YNPEGPQISFWQLSHFHKCSAQFPEIGCEMFSNEMSRS) the chain is on the lumenal side. A helical transmembrane segment spans residues 855–875 (ASTVSLSILVVIEMLNAMNAL). Position 867 (E867) interacts with Ca(2+). Topologically, residues 876-891 (SSSESLLAFPLWNNMM) are cytoplasmic. Residues 892–912 (LVYAIILSMTLHFAILYIPFL) traverse the membrane as a helical segment. Residues 913–917 (QTLFS) lie on the Lumenal side of the membrane. Residues 918 to 938 (ILPLNWTEWKAVLAISAPVVA) traverse the membrane as a helical segment. Over 939–971 (IDELLKYAERRLYTLPAIAGEQQNGVAFKPKKA) the chain is Cytoplasmic.

It belongs to the cation transport ATPase (P-type) (TC 3.A.3) family. Mg(2+) is required as a cofactor.

It is found in the endoplasmic reticulum membrane. The catalysed reaction is Ca(2+)(in) + ATP + H2O = Ca(2+)(out) + ADP + phosphate + H(+). Its function is as follows. Magnesium-dependent enzyme catalyzes the hydrolysis of ATP coupled with the translocation of calcium from the cytosol to the endoplasmic reticulum lumen. Its activity is coupled to the unfolded protein response (UPR) and Ca(2+) import into the endoplasmioc reticulum is important for redox homeostasis, virulence, cell wall biosynthesis, and resistance to antifungal compounds that inhibit Ca2+ signaling. With pmrA, promotes radial growth and conidiation. In Aspergillus fumigatus (strain ATCC MYA-4609 / CBS 101355 / FGSC A1100 / Af293) (Neosartorya fumigata), this protein is Endoplasmic reticulum calcium ATPase srcA (srcA).